A 391-amino-acid polypeptide reads, in one-letter code: Elongation factor Tu 2 (391 aa).

One can recognise a tr-type G domain in the interval 10–201 (KPHVNIGTIG…EVDNYIPTPE (192 aa)). The G1 stretch occupies residues 19–26 (GHVDHGKT). GTP is bound at residue 19–26 (GHVDHGKT). T26 provides a ligand contact to Mg(2+). A G2 region spans residues 55–59 (GITIS). Residues 76-79 (DCPG) form a G3 region. GTP-binding positions include 76–80 (DCPGH) and 131–134 (NKVD). The segment at 131–134 (NKVD) is G4. A G5 region spans residues 169 to 171 (SAL).

It belongs to the TRAFAC class translation factor GTPase superfamily. Classic translation factor GTPase family. EF-Tu/EF-1A subfamily. Monomer.

It is found in the cytoplasm. It carries out the reaction GTP + H2O = GDP + phosphate + H(+). Functionally, GTP hydrolase that promotes the GTP-dependent binding of aminoacyl-tRNA to the A-site of ribosomes during protein biosynthesis. The protein is Elongation factor Tu 2 of Bartonella quintana (strain Toulouse) (Rochalimaea quintana).